We begin with the raw amino-acid sequence, 88 residues long: Synaptonemal complex central element protein 3 (88 aa).

Positions 7–75 form a coiled coil; that stretch reads EERNYDNMLK…FVNCKEEMEK (69 aa).

In terms of assembly, homodimer. Can form higher-order homooligomers. Interacts with SYCP1 (via tetrameric core); the interaction remodels SYCP1 homotetramers to 2:1 heterotrimers with SYCE3. SYCP1/SYCE3 heterotrimers form lattice assemblies as part of the mature synaptonemal complex via both lateral and head-to-head interactions. Interacts with the SYCE1-SIX6OS1 complex; the interaction recruits the SYCE1-SIX6OS1 complex to the central element of the synaptonemal complex. Interacts with the SYCE2-TEX12 complex; the interaction promotes fibrous assembly of SYCE2-TEX12 as part of the synaptonemal complex central element. Interacts with SYCE1. Interacts with SYCE2. Interacts with proteasome subunit PSMA8; to participate in meiosis progression during spermatogenesis. Interacts with SPO16.

It localises to the nucleus. The protein resides in the chromosome. Major component of the transverse central element of synaptonemal complexes (SCS), formed between homologous chromosomes during meiotic prophase. Required for the assembly of the central element of the synaptonemal complex during meiosis, via remodeling of SYCP1 lattice structures and promoting recruitment of SYCE2-TEX12 and SYCE1-SIX60S1 complexes. Required for chromosome loading of the central element-specific SCS proteins, and for initiating synapsis between homologous chromosomes. Chromosome loading appears to require SYCP1. Required for fertility and normal testis development. This chain is Synaptonemal complex central element protein 3, found in Homo sapiens (Human).